Consider the following 252-residue polypeptide: 3-dehydroquinate dehydratase (252 aa).

3-dehydroquinate-binding positions include S21, 46–48 (EWR), and R82. The active-site Proton donor/acceptor is H143. K170 serves as the catalytic Schiff-base intermediate with substrate. 3-dehydroquinate-binding residues include R213, S232, and Q236.

This sequence belongs to the type-I 3-dehydroquinase family. Dimer of dimers.

It catalyses the reaction 3-dehydroquinate = 3-dehydroshikimate + H2O. Its pathway is metabolic intermediate biosynthesis; chorismate biosynthesis; chorismate from D-erythrose 4-phosphate and phosphoenolpyruvate: step 3/7. Inhibited by (2R)-2-methyl-3-dehydroquinic acid. Its function is as follows. Involved in the third step of the chorismate pathway, which leads to the biosynthesis of aromatic amino acids. Catalyzes the cis-dehydration of 3-dehydroquinate (DHQ) and introduces the first double bond of the aromatic ring to yield 3-dehydroshikimate. The reaction involves the formation of an imine intermediate between the keto group of 3-dehydroquinate and the epsilon-amino group of Lys-170 at the active site. The sequence is that of 3-dehydroquinate dehydratase from Salmonella typhi.